The following is a 317-amino-acid chain: Ribosomal RNA small subunit methyltransferase H (317 aa).

Residues 37–39, D56, F85, D106, and Q113 contribute to the S-adenosyl-L-methionine site; that span reads AGH.

It belongs to the methyltransferase superfamily. RsmH family.

The protein localises to the cytoplasm. It catalyses the reaction cytidine(1402) in 16S rRNA + S-adenosyl-L-methionine = N(4)-methylcytidine(1402) in 16S rRNA + S-adenosyl-L-homocysteine + H(+). Its function is as follows. Specifically methylates the N4 position of cytidine in position 1402 (C1402) of 16S rRNA. This Lactococcus lactis subsp. lactis (strain IL1403) (Streptococcus lactis) protein is Ribosomal RNA small subunit methyltransferase H.